The primary structure comprises 522 residues: Zinc finger protein 329 (522 aa).

Ser-30 is subject to Phosphoserine. 12 C2H2-type zinc fingers span residues Tyr-184–His-206, Tyr-212–His-234, Tyr-240–His-262, Tyr-268–His-290, Tyr-296–His-318, Tyr-324–His-346, Phe-352–His-374, Tyr-380–His-402, Tyr-408–His-430, Tyr-436–His-458, Tyr-464–His-486, and Ser-492–His-514.

It belongs to the krueppel C2H2-type zinc-finger protein family.

It is found in the nucleus. In terms of biological role, may be involved in transcriptional regulation. In Mus musculus (Mouse), this protein is Zinc finger protein 329 (Znf329).